A 187-amino-acid polypeptide reads, in one-letter code: Elongation factor P (187 aa).

The protein belongs to the elongation factor P family.

Its subcellular location is the cytoplasm. Its pathway is protein biosynthesis; polypeptide chain elongation. In terms of biological role, involved in peptide bond synthesis. Stimulates efficient translation and peptide-bond synthesis on native or reconstituted 70S ribosomes in vitro. Probably functions indirectly by altering the affinity of the ribosome for aminoacyl-tRNA, thus increasing their reactivity as acceptors for peptidyl transferase. In Prochlorococcus marinus (strain NATL2A), this protein is Elongation factor P.